The primary structure comprises 68 residues: Large ribosomal subunit protein bL35 (68 aa).

It belongs to the bacterial ribosomal protein bL35 family.

This is Large ribosomal subunit protein bL35 from Fusobacterium nucleatum subsp. nucleatum (strain ATCC 25586 / DSM 15643 / BCRC 10681 / CIP 101130 / JCM 8532 / KCTC 2640 / LMG 13131 / VPI 4355).